We begin with the raw amino-acid sequence, 260 residues long: Acetylglutamate kinase (260 aa).

Substrate-binding positions include Gly-46–Gly-47, Arg-68, and Asn-160.

This sequence belongs to the acetylglutamate kinase family. ArgB subfamily.

The protein localises to the cytoplasm. It catalyses the reaction N-acetyl-L-glutamate + ATP = N-acetyl-L-glutamyl 5-phosphate + ADP. The protein operates within amino-acid biosynthesis; L-arginine biosynthesis; N(2)-acetyl-L-ornithine from L-glutamate: step 2/4. Catalyzes the ATP-dependent phosphorylation of N-acetyl-L-glutamate. The protein is Acetylglutamate kinase of Shewanella baltica (strain OS223).